Consider the following 306-residue polypeptide: MLKGKSLLCLLDFSKQEIEKMMEVSFQMKNFHMLRSVPRSLDGKTVAMLFEKPSTRTRVSFETAIRLLGGNPIVLNKSDIQLSRGEPVEDTARVLGRFVDGIAARVLKHETLELLAKYSNKPTINLLSDLSHPLQALADFMTIKEKFGEYTSLTFVGDGGDNVLVSLMAFVAKMGLEIKIASPKEFKPRDDIMKRIEEEAEKSGAIIEFYEDPYEAVRGSKVVYTDVWVSMGQESIAEKKKELLRNYRVSVDLMRYASKDAIFMHCLPAVRGEEVENEVIDGPKSAVWDQAENRLYTAMSVLSLLL.

Carbamoyl phosphate is bound by residues serine 54 to threonine 57, glutamine 81, arginine 105, and histidine 132 to glutamine 135. L-ornithine contacts are provided by residues asparagine 162, aspartate 226, and serine 230–methionine 231. Carbamoyl phosphate contacts are provided by residues cysteine 266–leucine 267 and arginine 294.

Belongs to the aspartate/ornithine carbamoyltransferase superfamily. OTCase family.

It localises to the cytoplasm. It carries out the reaction carbamoyl phosphate + L-ornithine = L-citrulline + phosphate + H(+). Its pathway is amino-acid biosynthesis; L-arginine biosynthesis; L-arginine from L-ornithine and carbamoyl phosphate: step 1/3. Reversibly catalyzes the transfer of the carbamoyl group from carbamoyl phosphate (CP) to the N(epsilon) atom of ornithine (ORN) to produce L-citrulline. The protein is Ornithine carbamoyltransferase of Sulfurisphaera tokodaii (strain DSM 16993 / JCM 10545 / NBRC 100140 / 7) (Sulfolobus tokodaii).